The primary structure comprises 228 residues: Large ribosomal subunit protein uL23m (228 aa).

The tract at residues 194-228 is disordered; sequence PEEEGWSEVEENLPLDESAESAAEESSSKGSETRQ. The span at 195-216 shows a compositional bias: acidic residues; that stretch reads EEEGWSEVEENLPLDESAESAA.

Belongs to the universal ribosomal protein uL23 family. Component of the mitochondrial large ribosomal subunit (mt-LSU). Mature N.crassa 74S mitochondrial ribosomes consist of a small (37S) and a large (54S) subunit. The 37S small subunit contains a 16S ribosomal RNA (16S mt-rRNA) and 32 different proteins. The 54S large subunit contains a 23S rRNA (23S mt-rRNA) and 42 different proteins. uL23m forms the wall of the exit tunnel.

It is found in the mitochondrion. In terms of biological role, component of the mitochondrial ribosome (mitoribosome), a dedicated translation machinery responsible for the synthesis of mitochondrial genome-encoded proteins, including at least some of the essential transmembrane subunits of the mitochondrial respiratory chain. The mitoribosomes are attached to the mitochondrial inner membrane and translation products are cotranslationally integrated into the membrane. The polypeptide is Large ribosomal subunit protein uL23m (mrp20) (Neurospora crassa (strain ATCC 24698 / 74-OR23-1A / CBS 708.71 / DSM 1257 / FGSC 987)).